Here is a 234-residue protein sequence, read N- to C-terminus: Carboxy-S-adenosyl-L-methionine synthase (234 aa).

S-adenosyl-L-methionine is bound by residues tyrosine 35, 60-62, 109-110, asparagine 124, and arginine 191; these read GCS and DV.

It belongs to the class I-like SAM-binding methyltransferase superfamily. Cx-SAM synthase family. Homodimer.

It catalyses the reaction prephenate + S-adenosyl-L-methionine = carboxy-S-adenosyl-L-methionine + 3-phenylpyruvate + H2O. In terms of biological role, catalyzes the conversion of S-adenosyl-L-methionine (SAM) to carboxy-S-adenosyl-L-methionine (Cx-SAM). This Campylobacter curvus (strain 525.92) protein is Carboxy-S-adenosyl-L-methionine synthase.